The primary structure comprises 92 residues: Small ribosomal subunit protein uS19 (92 aa).

Belongs to the universal ribosomal protein uS19 family.

Protein S19 forms a complex with S13 that binds strongly to the 16S ribosomal RNA. The chain is Small ribosomal subunit protein uS19 from Rickettsia typhi (strain ATCC VR-144 / Wilmington).